Reading from the N-terminus, the 1218-residue chain is NACHT, LRR and PYD domains-containing protein 1 allele 2 (1218 aa).

A disordered region spans residues 1 to 61; that stretch reads MEESQSKQES…SLPGWSSTSK (61 aa). Over residues 7 to 29 the composition is skewed to polar residues; it reads KQESNTRVAQHGSQQDVDPTFQT. The 310-residue stretch at 175 to 484 folds into the NACHT domain; it reads QLVIIEGAAG…EFFAAMSYIL (310 aa). 181 to 188 lines the ATP pocket; the sequence is GAAGIGKS. LRR repeat units lie at residues 343–364, 673–693, and 730–750; these read KERN…LTLC, NLEE…RSLC, and RLAE…RQLC. Residues 799–815 show a composition bias toward polar residues; it reads TMPTENTDGEESLTSSK. Residues 799–842 are disordered; it reads TMPTENTDGEESLTSSKQQQQQSGDKHMEPLGTDDDFWGPSGPV. The interval 835–968 is ZU5; sequence FWGPSGPVST…HFAVLENPSF (134 aa). The FIIND domain maps to 835-1118; sequence FWGPSGPVST…LRPALPRMAS (284 aa). The tract at residues 969–1118 is UPA; the sequence is SPMGVLLRMI…LRPALPRMAS (150 aa). One can recognise a CARD domain in the interval 1122–1211; it reads DAPALLHFVD…HLIMDLLEKS (90 aa).

It belongs to the NLRP family. In terms of assembly, interacts (via LRR repeats) with BCL2 and BCL2L1 (via the loop between motifs BH4 and BH3). Interacts with NOD2; this interaction is enhanced in the presence of muramyl dipeptide (MDP) and increases IL1B release. Interacts with EIF2AK2/PKR; this interaction requires EIF2AK2 activity, is accompanied by EIF2AK2 autophosphorylation and promotes inflammasome assembly in response to danger-associated signals. Interacts with MEFV; this interaction targets Nlrp1a to degradation by autophagy, hence preventing excessive IL1B- and IL18-mediated inflammation. Interacts with DPP9; leading to inhibit activation of the inflammasome. DPP9 acts via formation of a ternary complex, composed of a DPP9 homodimer, one full-length NLRP1 protein, and one cleaved C-terminus of Nlrp1a (NACHT, LRR and PYD domains-containing protein 1a, C-terminus). Interacts with DPP8; leading to inhibit activation of the inflammasome, probably via formation of a ternary complex with DPP8. Interacts with the C-terminal part of Nlrp1a (NACHT, LRR and PYD domains-containing protein 1a, C-terminus) in absence of pathogens and other damage-associated signals. As to quaternary structure, interacts with the N-terminal part of Nlrp1a (NACHT, LRR and PYD domains-containing protein 1a, N-terminus) in absence of pathogens and other damage-associated signals. Homomultimer; forms the Nlrp1a inflammasome polymeric complex, a filament composed of homopolymers of this form in response to pathogens and other damage-associated signals. The Nlrp1a inflammasome polymeric complex directly recruits pro-caspase-1 (proCASP1) independently of PYCARD/ASC. Interacts (via CARD domain) with CASP1 (via CARD domain); leading to CASP1 activation. Autocatalytically cleaved. Autocatalytic cleavage in FIIND region occurs constitutively, prior to activation signals, and is required for inflammasome activity (IL1B release), possibly by facilitating CASP1 binding. Both N- and C-terminal parts remain associated non-covalently. Post-translationally, (Microbial infection) Cleavage by B.anthracis lethal toxin (LT) endopeptidase promotes ubiquitination and degradation of the N-terminal part, releasing the cleaved C-terminal part of the protein (NACHT, LRR and PYD domains-containing protein 1a, C-terminus), which polymerizes and forms the Nlrp1a inflammasome. In terms of processing, ubiquitinated in response to pathogen-associated signals, leading to its degradation by the proteasome and subsequent release of the cleaved C-terminal part of the protein (NACHT, LRR and PYD domains-containing protein 1a, C-terminus), which polymerizes and forms the Nlrp1a inflammasome.

It is found in the cytoplasm. Its subcellular location is the cytosol. The protein resides in the nucleus. It localises to the inflammasome. Its activity is regulated as follows. Activated by cleavage by B.anthracis lethal toxin (LT) endopeptidase. Cleavage by LT promotes ubiquitination and degradation of the N-terminal part, releasing the cleaved C-terminal part of the protein (NACHT, LRR and PYD domains-containing protein 1a, C-terminus), which polymerizes and forms the Nlrp1a inflammasome. Nlrp1a inflammasome is inhibited by DPP8 and DPP9, which sequester the C-terminal fragment of Nlrp1a (NACHT, LRR and PYD domains-containing protein 1a, C-terminus) in a ternary complex, thereby preventing Nlrp1a oligomerization and activation. Nlrp1a inflammasome is weakly activated by Val-boroPro (Talabostat, PT-100), an inhibitor of dipeptidyl peptidases DPP8 and DPP9. Val-boroPro relieves inhibition of DPP8 and/or DPP9 by promoting disruption of the ternary complex, releasing its C-terminal part from autoinhibition. Weakly activated by Toxoplasma gondii. Its function is as follows. Acts as the sensor component of the Nlrp1a inflammasome, which mediates inflammasome activation in response to various pathogen-associated signals, leading to subsequent pyroptosis. Inflammasomes are supramolecular complexes that assemble in the cytosol in response to pathogens and other damage-associated signals and play critical roles in innate immunity and inflammation. Acts as a recognition receptor (PRR): recognizes specific pathogens and other damage-associated signals, such as B.anthracis lethal toxin (LT) or Val-boroPro inhibitor, and mediates the formation of the inflammasome polymeric complex. In response to pathogen-associated signals, the N-terminal part of Nlrp1a is degraded by the proteasome, releasing the cleaved C-terminal part of the protein (NACHT, LRR and PYD domains-containing protein 1a, C-terminus), which polymerizes to initiate the formation of the inflammasome complex: the inflammasome directly recruits pro-caspase-1 (proCASP1) independently of PYCARD/ASC and promotes caspase-1 (CASP1) activation, which subsequently cleaves and activates inflammatory cytokines IL1B and IL18 and gasdermin-D (GSDMD), leading to pyroptosis. In the absence of GSDMD expression, the Nlrp1a inflammasome is able to recruit and activate CASP8, leading to activation of gasdermin-E (GSDME). Constitutes the precursor of the Nlrp1a inflammasome, which mediates autoproteolytic processing within the FIIND domain to generate the N-terminal and C-terminal parts, which are associated non-covalently in absence of pathogens and other damage-associated signals. In terms of biological role, regulatory part that prevents formation of the Nlrp1a inflammasome: in absence of pathogens and other damage-associated signals, interacts with the C-terminal part of Nlrp1a (NACHT, LRR and PYD domains-containing protein 1a, C-terminus), preventing activation of the Nlrp1a inflammasome. In response to pathogen-associated signals, this part is ubiquitinated by the N-end rule pathway and degraded by the proteasome, releasing the cleaved C-terminal part of the protein, which polymerizes and forms the Nlrp1a inflammasome. Functionally, constitutes the active part of the Nlrp1a inflammasome. In absence of pathogens and other damage-associated signals, interacts with the N-terminal part of Nlrp1a (NACHT, LRR and PYD domains-containing protein 1a, N-terminus), preventing activation of the Nlrp1a inflammasome. In response to pathogen-associated signals, the N-terminal part of Nlrp1a is degraded by the proteasome, releasing this form, which polymerizes to form the Nlrp1a inflammasome complex: the Nlrp1a inflammasome complex then directly recruits pro-caspase-1 (proCASP1) and promotes caspase-1 (CASP1) activation, leading to gasdermin-D (GSDMD) cleavage and subsequent pyroptosis. The protein is NACHT, LRR and PYD domains-containing protein 1 allele 2 of Rattus norvegicus (Rat).